Here is a 415-residue protein sequence, read N- to C-terminus: Serine hydroxymethyltransferase (415 aa).

(6S)-5,6,7,8-tetrahydrofolate is bound by residues Leu-117 and 121-123 (GHL). Lys-226 is subject to N6-(pyridoxal phosphate)lysine. Glu-241 serves as a coordination point for (6S)-5,6,7,8-tetrahydrofolate.

Belongs to the SHMT family. In terms of assembly, homodimer. It depends on pyridoxal 5'-phosphate as a cofactor.

Its subcellular location is the cytoplasm. It catalyses the reaction (6R)-5,10-methylene-5,6,7,8-tetrahydrofolate + glycine + H2O = (6S)-5,6,7,8-tetrahydrofolate + L-serine. It functions in the pathway one-carbon metabolism; tetrahydrofolate interconversion. The protein operates within amino-acid biosynthesis; glycine biosynthesis; glycine from L-serine: step 1/1. Its function is as follows. Catalyzes the reversible interconversion of serine and glycine with tetrahydrofolate (THF) serving as the one-carbon carrier. This reaction serves as the major source of one-carbon groups required for the biosynthesis of purines, thymidylate, methionine, and other important biomolecules. Also exhibits THF-independent aldolase activity toward beta-hydroxyamino acids, producing glycine and aldehydes, via a retro-aldol mechanism. This Bacillus pumilus (strain SAFR-032) protein is Serine hydroxymethyltransferase.